A 181-amino-acid chain; its full sequence is Peptide deformylase (181 aa).

2 residues coordinate Fe cation: Cys103 and His145. Glu146 is a catalytic residue. A Fe cation-binding site is contributed by His149.

It belongs to the polypeptide deformylase family. Requires Fe(2+) as cofactor.

It catalyses the reaction N-terminal N-formyl-L-methionyl-[peptide] + H2O = N-terminal L-methionyl-[peptide] + formate. Removes the formyl group from the N-terminal Met of newly synthesized proteins. Requires at least a dipeptide for an efficient rate of reaction. N-terminal L-methionine is a prerequisite for activity but the enzyme has broad specificity at other positions. This chain is Peptide deformylase, found in Orientia tsutsugamushi (strain Boryong) (Rickettsia tsutsugamushi).